We begin with the raw amino-acid sequence, 168 residues long: DAZ-associated protein 2 (168 aa).

Low complexity predominate over residues 1–13; it reads MNSKGQYPTQPTY. Positions 1–25 are disordered; it reads MNSKGQYPTQPTYPVQPPGNPVYPQ. A PPAY motif is present at residues 39-42; that stretch reads PPAY. Serine 77 bears the Phosphoserine mark.

As to quaternary structure, interacts with SOX6. Interacts with DAZ1 and DAZL. Interacts with IL17RB. May interact with FAM168B. Interacts with INCA1. Interacts with EIF4G1 and EIF4G2. Interacts (via PPAY motif) with NEDD4 (via WW domains). Interacts with transcription factor TCF4; the interaction results in localization of DAZAP2 to the nucleus. Interacts with transcription factors TCF7 and TCF7L1. Interacts with transcription factor LEF1. Interacts with serine/threonine-protein kinase HIPK2; the interaction results in phosphorylation of DAZAP2 which causes localization of DAZAP2 to the nucleus, reduces interaction of DAZAP2 with HIPK2 and prevents DAZAP2-dependent degradation of HIPK2. Interacts with ubiquitin ligase SIAH1; the interaction is decreased following phosphorylation of DAZAP2 by HIPK2. Interacts with TP53; the interaction is triggered by DNA damage. In terms of processing, ubiquitinated by SMURF2, leading to proteasomal degradation. Ubiquitinated by NEDD4, leading to proteasomal degradation. Post-translationally, following DNA damage, phosphorylated by HIPK2 which promotes DAZAP2 localization to the nucleus, reduces interaction of DAZAP2 with HIPK2 and SIAH1, and prevents DAZAP2-dependent ubiquitination of HIPK2 by E3 ubiquitin-protein ligase SIAH1 and subsequent HIPK2 proteasomal degradation.

The protein localises to the cytoplasm. Its subcellular location is the nucleus. The protein resides in the nucleus speckle. It localises to the nuclear body. It is found in the stress granule. Its function is as follows. In unstressed cells, promotes SIAH1-mediated polyubiquitination and degradation of the serine/threonine-protein kinase HIPK2, probably by acting as a loading factor that potentiates complex formation between HIPK2 and ubiquitin ligase SIAH1. In response to DNA damage, localizes to the nucleus following phosphorylation by HIPK2 and modulates the expression of a subset of TP53/p53 target genes by binding to TP53 at target gene promoters. This limits the expression of a number of cell death-mediating TP53 target genes, reducing DNA damage-induced cell death. Enhances the binding of transcription factor TCF7L2/TCF4, a Wnt signaling pathway effector, to the promoters of target genes. Plays a role in stress granule formation. The polypeptide is DAZ-associated protein 2 (Bos taurus (Bovine)).